The primary structure comprises 240 residues: Regulatory protein HlyX (240 aa).

Residues 15–28 (CTIHCQNCSISQLC) are essential for the oxygen-regulated activity. The HTH crp-type domain occupies 163–236 (MSAEEKLAAF…GKYITINRMD (74 aa)). Positions 196-215 (RGDIGNYLGLTIETISRLLG) form a DNA-binding region, H-T-H motif.

It localises to the cytoplasm. Functionally, confers a hemolytic phenotype on E.coli. May regulate, rather than mediate, hemolytic activity. In Actinobacillus pleuropneumoniae (Haemophilus pleuropneumoniae), this protein is Regulatory protein HlyX (hlyX).